The following is a 547-amino-acid chain: Glucose-6-phosphate isomerase (547 aa).

Glu353 (proton donor) is an active-site residue. Catalysis depends on residues His384 and Lys512.

Belongs to the GPI family.

It is found in the cytoplasm. The catalysed reaction is alpha-D-glucose 6-phosphate = beta-D-fructose 6-phosphate. It participates in carbohydrate biosynthesis; gluconeogenesis. Its pathway is carbohydrate degradation; glycolysis; D-glyceraldehyde 3-phosphate and glycerone phosphate from D-glucose: step 2/4. Its function is as follows. Catalyzes the reversible isomerization of glucose-6-phosphate to fructose-6-phosphate. This is Glucose-6-phosphate isomerase from Glaesserella parasuis serovar 5 (strain SH0165) (Haemophilus parasuis).